Consider the following 120-residue polypeptide: Glycine cleavage system H protein (120 aa).

The region spanning 20–102 (DGTVGISDHA…YEGGWLFKLD (83 aa)) is the Lipoyl-binding domain. At K61 the chain carries N6-lipoyllysine.

It belongs to the GcvH family. As to quaternary structure, the glycine cleavage system is composed of four proteins: P, T, L and H. (R)-lipoate is required as a cofactor.

In terms of biological role, the glycine cleavage system catalyzes the degradation of glycine. The H protein shuttles the methylamine group of glycine from the P protein to the T protein. The chain is Glycine cleavage system H protein from Deinococcus radiodurans (strain ATCC 13939 / DSM 20539 / JCM 16871 / CCUG 27074 / LMG 4051 / NBRC 15346 / NCIMB 9279 / VKM B-1422 / R1).